The primary structure comprises 529 residues: Bifunctional purine biosynthesis protein PurH (529 aa).

Residues 1 to 148 (MNNARPIRRA…KNHKDVVIVV (148 aa)) enclose the MGS-like domain.

The protein belongs to the PurH family.

The catalysed reaction is (6R)-10-formyltetrahydrofolate + 5-amino-1-(5-phospho-beta-D-ribosyl)imidazole-4-carboxamide = 5-formamido-1-(5-phospho-D-ribosyl)imidazole-4-carboxamide + (6S)-5,6,7,8-tetrahydrofolate. The enzyme catalyses IMP + H2O = 5-formamido-1-(5-phospho-D-ribosyl)imidazole-4-carboxamide. The protein operates within purine metabolism; IMP biosynthesis via de novo pathway; 5-formamido-1-(5-phospho-D-ribosyl)imidazole-4-carboxamide from 5-amino-1-(5-phospho-D-ribosyl)imidazole-4-carboxamide (10-formyl THF route): step 1/1. It participates in purine metabolism; IMP biosynthesis via de novo pathway; IMP from 5-formamido-1-(5-phospho-D-ribosyl)imidazole-4-carboxamide: step 1/1. The sequence is that of Bifunctional purine biosynthesis protein PurH from Shewanella amazonensis (strain ATCC BAA-1098 / SB2B).